The following is an 876-amino-acid chain: Radial spoke head 10 homolog B (876 aa).

The segment covering Met-1–Ala-16 has biased composition (basic and acidic residues). The segment at Met-1–Thr-71 is disordered. Over residues Arg-17–Lys-37 the composition is skewed to polar residues. The segment covering Glu-39 to Glu-50 has biased composition (low complexity). MORN repeat units lie at residues Tyr-86–Thr-108, Tyr-109–Gly-129, Tyr-132–Thr-154, Tyr-155–Cys-172, Tyr-179–Tyr-196, Tyr-204–Asn-225, Tyr-227–Trp-244, Tyr-251–Trp-268, Tyr-284–Ala-305, and Tyr-307–His-328. Residues Trp-356–Ser-372 show a composition bias toward polar residues. The segment at Trp-356–Ser-386 is disordered. The span at Arg-375–Ser-386 shows a compositional bias: basic and acidic residues. The stretch at Leu-790–Phe-832 forms a coiled coil. The segment at Leu-839–Lys-876 is disordered.

In terms of assembly, interacts with RSPH6A. Does not appear to be part of the axonemal radial spoke complexes 1 or 2. As to expression, expressed in ependymal cells (at protein level).

It is found in the cytoplasm. The protein localises to the cytoskeleton. Its subcellular location is the cilium axoneme. The protein resides in the cell projection. It localises to the cilium. It is found in the flagellum. Its function is as follows. May function as part of the axonemal radial spoke complex 3 (RS3). Radial spoke complexes are important for ciliary motility. The polypeptide is Radial spoke head 10 homolog B (Mus musculus (Mouse)).